We begin with the raw amino-acid sequence, 305 residues long: Succinate--CoA ligase [ADP-forming] subunit alpha (305 aa).

Residues Thr-17 to Glu-20, Lys-43, and Ile-96 to Glu-98 contribute to the CoA site. Tyr-161 contacts substrate. Residue His-249 is the Tele-phosphohistidine intermediate of the active site.

It belongs to the succinate/malate CoA ligase alpha subunit family. In terms of assembly, heterotetramer of two alpha and two beta subunits.

The catalysed reaction is succinate + ATP + CoA = succinyl-CoA + ADP + phosphate. It catalyses the reaction GTP + succinate + CoA = succinyl-CoA + GDP + phosphate. It participates in carbohydrate metabolism; tricarboxylic acid cycle; succinate from succinyl-CoA (ligase route): step 1/1. Its function is as follows. Succinyl-CoA synthetase functions in the citric acid cycle (TCA), coupling the hydrolysis of succinyl-CoA to the synthesis of either ATP or GTP and thus represents the only step of substrate-level phosphorylation in the TCA. The alpha subunit of the enzyme binds the substrates coenzyme A and phosphate, while succinate binding and nucleotide specificity is provided by the beta subunit. The polypeptide is Succinate--CoA ligase [ADP-forming] subunit alpha (Aquifex aeolicus (strain VF5)).